Consider the following 418-residue polypeptide: Histidinol dehydrogenase (418 aa).

Residues Tyr-119, Gln-180, and Asn-203 each coordinate NAD(+). Residues Thr-226, Gln-248, and His-251 each contribute to the substrate site. Zn(2+) contacts are provided by Gln-248 and His-251. Residues Glu-316 and His-317 each act as proton acceptor in the active site. Residues His-317, Asp-350, Glu-404, and His-409 each coordinate substrate. Asp-350 contributes to the Zn(2+) binding site. His-409 is a binding site for Zn(2+).

It belongs to the histidinol dehydrogenase family. Zn(2+) serves as cofactor.

It catalyses the reaction L-histidinol + 2 NAD(+) + H2O = L-histidine + 2 NADH + 3 H(+). It functions in the pathway amino-acid biosynthesis; L-histidine biosynthesis; L-histidine from 5-phospho-alpha-D-ribose 1-diphosphate: step 9/9. In terms of biological role, catalyzes the sequential NAD-dependent oxidations of L-histidinol to L-histidinaldehyde and then to L-histidine. The chain is Histidinol dehydrogenase from Staphylococcus aureus (strain COL).